The following is a 207-amino-acid chain: Large ribosomal subunit protein uL4 (207 aa).

Positions 52–77 are disordered; the sequence is RGWADVSGGGRKPWRQKGTGRARAGS.

Belongs to the universal ribosomal protein uL4 family. In terms of assembly, part of the 50S ribosomal subunit.

Its function is as follows. One of the primary rRNA binding proteins, this protein initially binds near the 5'-end of the 23S rRNA. It is important during the early stages of 50S assembly. It makes multiple contacts with different domains of the 23S rRNA in the assembled 50S subunit and ribosome. In terms of biological role, forms part of the polypeptide exit tunnel. The chain is Large ribosomal subunit protein uL4 from Moorella thermoacetica (strain ATCC 39073 / JCM 9320).